The primary structure comprises 435 residues: Trigger factor (435 aa).

The disordered stretch occupies residues 125–147 (MEVPEQDTSVSDADVDSELENKR). A PPIase FKBP-type domain is found at 164–249 (GDTVVIDYEG…IHEVKEKQLP (86 aa)).

It belongs to the FKBP-type PPIase family. Tig subfamily.

It is found in the cytoplasm. It carries out the reaction [protein]-peptidylproline (omega=180) = [protein]-peptidylproline (omega=0). Its function is as follows. Involved in protein export. Acts as a chaperone by maintaining the newly synthesized protein in an open conformation. Functions as a peptidyl-prolyl cis-trans isomerase. In Limosilactobacillus fermentum (strain NBRC 3956 / LMG 18251) (Lactobacillus fermentum), this protein is Trigger factor.